Reading from the N-terminus, the 260-residue chain is MAKPKIGLALGSGGARGLAHLGVLSSLHKHQIEVDMIAGSSMGALVGSFYAAGHDVATMKKVAKAFKRRLYADYTVPKLGFLKGDRVRQLVHAYTFGKPIEELQIPLGIVACDLQTGEKIVFRKGSVSDAVRASISIPGIFIPQRLDGRLLVDGAVVDRIPVSVVKDMGADIIIASDVSRVRKTETAVHIFDVIMQSMDILQNELVRHQTIAADIMIRPSLETYSSSSFANIEEMISAGEEATNRMISKIRKEIENWEGS.

The PNPLA domain maps to 8–166 (LALGSGGARG…VDRIPVSVVK (159 aa)). The GXSXG motif lies at 39-43 (GSSMG). Ser-41 (nucleophile) is an active-site residue. Catalysis depends on Asp-153, which acts as the Proton acceptor. The DGA/G signature appears at 153–155 (DGA).

It belongs to the NTE family.

This is an uncharacterized protein from Bacillus subtilis (strain 168).